A 750-amino-acid chain; its full sequence is Eukaryotic translation initiation factor 3 subunit B (750 aa).

The 87-residue stretch at Thr-42–Asp-128 folds into the RRM domain. WD repeat units lie at residues Asp-195–Arg-234, Pro-236–Ser-292, Ser-309–Lys-348, and Leu-519–Glu-562.

It belongs to the eIF-3 subunit B family. Component of the eukaryotic translation initiation factor 3 (eIF-3) complex.

It localises to the cytoplasm. Its function is as follows. RNA-binding component of the eukaryotic translation initiation factor 3 (eIF-3) complex, which is involved in protein synthesis of a specialized repertoire of mRNAs and, together with other initiation factors, stimulates binding of mRNA and methionyl-tRNAi to the 40S ribosome. The eIF-3 complex specifically targets and initiates translation of a subset of mRNAs involved in cell proliferation. This Chaetomium globosum (strain ATCC 6205 / CBS 148.51 / DSM 1962 / NBRC 6347 / NRRL 1970) (Soil fungus) protein is Eukaryotic translation initiation factor 3 subunit B.